The chain runs to 436 residues: 3-phosphoshikimate 1-carboxyvinyltransferase (436 aa).

Lysine 23, serine 24, and arginine 28 together coordinate 3-phosphoshikimate. Lysine 23 provides a ligand contact to phosphoenolpyruvate. Phosphoenolpyruvate contacts are provided by glycine 97 and arginine 126. 3-phosphoshikimate-binding residues include serine 171, glutamine 173, aspartate 323, and lysine 350. Phosphoenolpyruvate is bound at residue glutamine 173. Aspartate 323 serves as the catalytic Proton acceptor. 2 residues coordinate phosphoenolpyruvate: arginine 354 and arginine 396.

Belongs to the EPSP synthase family. In terms of assembly, monomer.

The protein localises to the cytoplasm. It carries out the reaction 3-phosphoshikimate + phosphoenolpyruvate = 5-O-(1-carboxyvinyl)-3-phosphoshikimate + phosphate. The protein operates within metabolic intermediate biosynthesis; chorismate biosynthesis; chorismate from D-erythrose 4-phosphate and phosphoenolpyruvate: step 6/7. Functionally, catalyzes the transfer of the enolpyruvyl moiety of phosphoenolpyruvate (PEP) to the 5-hydroxyl of shikimate-3-phosphate (S3P) to produce enolpyruvyl shikimate-3-phosphate and inorganic phosphate. In Prochlorococcus marinus (strain MIT 9301), this protein is 3-phosphoshikimate 1-carboxyvinyltransferase.